Consider the following 128-residue polypeptide: Histone H2A type 1-H (128 aa).

The segment at 1 to 22 (MSGRGKQGGKARAKAKTRSSRA) is disordered. Position 2 is an N-acetylserine (serine 2). Serine 2 bears the Phosphoserine; by RPS6KA5 mark. The residue at position 4 (arginine 4) is a Citrulline; alternate. Residue arginine 4 is modified to Symmetric dimethylarginine; by PRMT5; alternate. Lysine 6 bears the N6-(2-hydroxyisobutyryl)lysine mark. Positions 7-19 (QGGKARAKAKTRS) are enriched in basic residues. Lysine 10 is modified (N6-(2-hydroxyisobutyryl)lysine; alternate). 2 positions are modified to N6-(beta-hydroxybutyryl)lysine; alternate: lysine 10 and lysine 14. Lysine 10 is modified (N6-lactoyllysine; alternate). N6-succinyllysine; alternate is present on lysine 10. A Glycyl lysine isopeptide (Lys-Gly) (interchain with G-Cter in ubiquitin); alternate cross-link involves residue lysine 14. Lysine 16 is covalently cross-linked (Glycyl lysine isopeptide (Lys-Gly) (interchain with G-Cter in ubiquitin)). Lysine 37 carries the N6-(2-hydroxyisobutyryl)lysine; alternate modification. Lysine 37 is subject to N6-(beta-hydroxybutyryl)lysine; alternate. Residue lysine 37 is modified to N6-crotonyllysine; alternate. Residues lysine 75 and lysine 76 each carry the N6-(2-hydroxyisobutyryl)lysine modification. Lysine 96 carries the post-translational modification N6-(2-hydroxyisobutyryl)lysine; alternate. At lysine 96 the chain carries N6-(beta-hydroxybutyryl)lysine; alternate. Lysine 96 bears the N6-succinyllysine; alternate mark. Lysine 96 is subject to N6-glutaryllysine; alternate. N6-glutaryllysine is present on lysine 100. Glutamine 105 carries the post-translational modification N5-methylglutamine. The residue at position 119 (lysine 119) is an N6-(2-hydroxyisobutyryl)lysine; alternate. At lysine 119 the chain carries N6-(beta-hydroxybutyryl)lysine; alternate. Lysine 119 and lysine 120 each carry N6-crotonyllysine; alternate. N6-glutaryllysine; alternate is present on residues lysine 119 and lysine 120. Lysine 120 is covalently cross-linked (Glycyl lysine isopeptide (Lys-Gly) (interchain with G-Cter in ubiquitin); alternate). Threonine 121 bears the Phosphothreonine; by DCAF1 mark. Position 126 is an N6-crotonyllysine; alternate (lysine 126). The residue at position 126 (lysine 126) is an N6-glutaryllysine; alternate.

The protein belongs to the histone H2A family. In terms of assembly, the nucleosome is a histone octamer containing two molecules each of H2A, H2B, H3 and H4 assembled in one H3-H4 heterotetramer and two H2A-H2B heterodimers. The octamer wraps approximately 147 bp of DNA. In terms of processing, deiminated on Arg-4 in granulocytes upon calcium entry. Monoubiquitination of Lys-120 (H2AK119Ub) by RING1, TRIM37 and RNF2/RING2 complex gives a specific tag for epigenetic transcriptional repression and participates in X chromosome inactivation of female mammals. It is involved in the initiation of both imprinted and random X inactivation. Ubiquitinated H2A is enriched in inactive X chromosome chromatin. Ubiquitination of H2A functions downstream of methylation of 'Lys-27' of histone H3 (H3K27me). H2AK119Ub by RNF2/RING2 can also be induced by ultraviolet and may be involved in DNA repair. Monoubiquitination of Lys-120 (H2AK119Ub) by TRIM37 may promote transformation of cells in a number of breast cancers. Following DNA double-strand breaks (DSBs), it is ubiquitinated through 'Lys-63' linkage of ubiquitin moieties by the E2 ligase UBE2N and the E3 ligases RNF8 and RNF168, leading to the recruitment of repair proteins to sites of DNA damage. Ubiquitination at Lys-14 and Lys-16 (H2AK13Ub and H2AK15Ub, respectively) in response to DNA damage is initiated by RNF168 that mediates monoubiquitination at these 2 sites, and 'Lys-63'-linked ubiquitin are then conjugated to monoubiquitin; RNF8 is able to extend 'Lys-63'-linked ubiquitin chains in vitro. Deubiquitinated by USP51 at Lys-14 and Lys-16 (H2AK13Ub and H2AK15Ub, respectively) after damaged DNA is repaired. H2AK119Ub and ionizing radiation-induced 'Lys-63'-linked ubiquitination (H2AK13Ub and H2AK15Ub) are distinct events. Post-translationally, phosphorylation on Ser-2 (H2AS1ph) is enhanced during mitosis. Phosphorylation on Ser-2 by RPS6KA5/MSK1 directly represses transcription. Acetylation of H3 inhibits Ser-2 phosphorylation by RPS6KA5/MSK1. Phosphorylation at Thr-121 (H2AT120ph) by DCAF1 is present in the regulatory region of many tumor suppresor genes and down-regulates their transcription. In terms of processing, glutamine methylation at Gln-105 (H2AQ104me) by FBL is specifically dedicated to polymerase I. It is present at 35S ribosomal DNA locus and impairs binding of the FACT complex. Symmetric dimethylation on Arg-4 by the PRDM1/PRMT5 complex may play a crucial role in the germ-cell lineage. Post-translationally, crotonylation (Kcr) is specifically present in male germ cells and marks testis-specific genes in post-meiotic cells, including X-linked genes that escape sex chromosome inactivation in haploid cells. Crotonylation marks active promoters and enhancers and confers resistance to transcriptional repressors. It is also associated with post-meiotically activated genes on autosomes. In terms of processing, lactylated in macrophages by EP300/P300 by using lactoyl-CoA directly derived from endogenous or exogenous lactate, leading to stimulates gene transcription.

It localises to the nucleus. Its subcellular location is the chromosome. Functionally, core component of nucleosome. Nucleosomes wrap and compact DNA into chromatin, limiting DNA accessibility to the cellular machineries which require DNA as a template. Histones thereby play a central role in transcription regulation, DNA repair, DNA replication and chromosomal stability. DNA accessibility is regulated via a complex set of post-translational modifications of histones, also called histone code, and nucleosome remodeling. The polypeptide is Histone H2A type 1-H (Homo sapiens (Human)).